The sequence spans 624 residues: Chaperone protein HtpG (624 aa).

The interval 1–336 (MSMKGQETRG…SNDLPLNVSR (336 aa)) is a; substrate-binding. The b stretch occupies residues 337–552 (EILQDSRVTQ…ADEMSTQMAK (216 aa)). Residues 553–624 (LFAAAGQQAP…IRRMNQLLTA (72 aa)) form a c region.

It belongs to the heat shock protein 90 family. In terms of assembly, homodimer.

Its subcellular location is the cytoplasm. Molecular chaperone. Has ATPase activity. This is Chaperone protein HtpG from Yersinia enterocolitica serotype O:8 / biotype 1B (strain NCTC 13174 / 8081).